A 648-amino-acid chain; its full sequence is Pumilio homolog 3 (648 aa).

The segment at Met1–Arg124 is disordered. The segment covering Ala17–Ser27 has biased composition (basic and acidic residues). An N6-acetyllysine modification is found at Lys33. The span at Leu60 to Lys69 shows a compositional bias: basic residues. Residues Phe94–Arg124 show a composition bias toward basic and acidic residues. Positions Lys106 to Lys118 match the Nuclear localization signal motif. Positions Glu143–Leu510 constitute a PUM-HD domain. 11 Pumilio repeats span residues His177 to Ala212, Lys213 to His248, Ala249 to Gly277, Arg289 to His325, Ser326 to Thr361, His362 to Gly397, Gln398 to Asp435, Lys436 to Asp504, Lys505 to His551, Pro552 to Val596, and Asn597 to Ser636. The interval Arg289–Val297 is HA-8.

In terms of assembly, interacts with PARP1 (via catalytic domain). Widely expressed.

The protein resides in the nucleus. Its subcellular location is the nucleolus. The protein localises to the nucleoplasm. It localises to the chromosome. Its function is as follows. Inhibits the poly(ADP-ribosyl)ation activity of PARP1 and the degradation of PARP1 by CASP3 following genotoxic stress. Binds to double-stranded RNA or DNA without sequence specificity. Involved in development of the eye and of primordial germ cells. The chain is Pumilio homolog 3 from Homo sapiens (Human).